Consider the following 144-residue polypeptide: Large ribosomal subunit protein uL15 (144 aa).

Positions 1–60 (MRLNSLRPAAGSRPDANRVGRGAGTGNGKTAGRGHKGQHSRSGGFTKVGFEGGQMPLQRR) are disordered. Residues 21–31 (RGAGTGNGKTA) show a composition bias toward gly residues.

The protein belongs to the universal ribosomal protein uL15 family. Part of the 50S ribosomal subunit.

In terms of biological role, binds to the 23S rRNA. This is Large ribosomal subunit protein uL15 from Alkalilimnicola ehrlichii (strain ATCC BAA-1101 / DSM 17681 / MLHE-1).